Reading from the N-terminus, the 249-residue chain is Pyridoxine 5'-phosphate synthase (249 aa).

Position 7 (N7) interacts with 3-amino-2-oxopropyl phosphate. Residue 9–10 (DH) coordinates 1-deoxy-D-xylulose 5-phosphate. R18 provides a ligand contact to 3-amino-2-oxopropyl phosphate. Catalysis depends on H43, which acts as the Proton acceptor. Residues R45 and H50 each coordinate 1-deoxy-D-xylulose 5-phosphate. E70 serves as the catalytic Proton acceptor. T100 is a binding site for 1-deoxy-D-xylulose 5-phosphate. H190 functions as the Proton donor in the catalytic mechanism. Residues G191 and 212–213 (GH) each bind 3-amino-2-oxopropyl phosphate.

It belongs to the PNP synthase family. In terms of assembly, homooctamer; tetramer of dimers.

It is found in the cytoplasm. It carries out the reaction 3-amino-2-oxopropyl phosphate + 1-deoxy-D-xylulose 5-phosphate = pyridoxine 5'-phosphate + phosphate + 2 H2O + H(+). It participates in cofactor biosynthesis; pyridoxine 5'-phosphate biosynthesis; pyridoxine 5'-phosphate from D-erythrose 4-phosphate: step 5/5. Catalyzes the complicated ring closure reaction between the two acyclic compounds 1-deoxy-D-xylulose-5-phosphate (DXP) and 3-amino-2-oxopropyl phosphate (1-amino-acetone-3-phosphate or AAP) to form pyridoxine 5'-phosphate (PNP) and inorganic phosphate. This is Pyridoxine 5'-phosphate synthase from Synechococcus sp. (strain CC9902).